A 323-amino-acid polypeptide reads, in one-letter code: Formyltetrahydrofolate deformylase 1, mitochondrial (323 aa).

The N-terminal 25 residues, 1–25 (MIRRITERASGFAKNIPILKSSRFH), are a transit peptide targeting the mitochondrion. The region spanning 41 to 124 (VHVFHCQDAV…SVVRVPSIDP (84 aa)) is the ACT domain. D267 is an active-site residue.

It belongs to the PurU family. In terms of tissue distribution, expressed in leaves, cotyledons, roots, seeds and flowers.

It is found in the mitochondrion. It catalyses the reaction (6R)-10-formyltetrahydrofolate + H2O = (6S)-5,6,7,8-tetrahydrofolate + formate + H(+). Functionally, deformylase involved in photorespiration. Prevents excessive accumulation of 5-formyl tetrahydrofolate (THF), a potent inhibitor of the Gly decarboxylase/Ser hydroxymethyltransferase complex. This is Formyltetrahydrofolate deformylase 1, mitochondrial (PURU1) from Arabidopsis thaliana (Mouse-ear cress).